A 925-amino-acid polypeptide reads, in one-letter code: Protein PDC2 (925 aa).

The 76-residue stretch at 63 to 138 (DANRLRKPNN…LSKMDVNISV (76 aa)) folds into the HTH CENPB-type domain. 3 disordered regions span residues 510–596 (DNNQ…RNSS), 674–693 (NEKA…SSTA), and 904–925 (PTGG…TGFF). Positions 513–537 (QNHLSMSQASHNPDYNSNHSNNAIE) are enriched in polar residues. The segment covering 538–563 (NTNNRGSNNNNNNNGSSNNINDNDSS) has biased composition (low complexity). Positions 565–596 (KYLQQNTVDNSTKTGNPGQPNISSMESQRNSS) are enriched in polar residues. Residues 674–686 (NEKAASDQNKSTD) show a composition bias toward basic and acidic residues. Over residues 904-916 (PTGGSNLPDSNNL) the composition is skewed to polar residues.

Its function is as follows. Essential for the synthesis of pyruvate decarboxylase. May be important for a high basal level of PDC gene expression or play a positive role in the autoregulation control of PDC1 and PDC5. This Saccharomyces cerevisiae (strain ATCC 204508 / S288c) (Baker's yeast) protein is Protein PDC2 (PDC2).